A 274-amino-acid chain; its full sequence is NH(3)-dependent NAD(+) synthetase (274 aa).

46–53 (GISGGQDS) lines the ATP pocket. Asp-52 is a binding site for Mg(2+). Arg-140 contributes to the deamido-NAD(+) binding site. Thr-160 is a binding site for ATP. Residue Glu-165 coordinates Mg(2+). Deamido-NAD(+) contacts are provided by Lys-173 and Asp-180. Lys-189 and Thr-211 together coordinate ATP. Residue 260–261 (HK) coordinates deamido-NAD(+).

This sequence belongs to the NAD synthetase family. As to quaternary structure, homodimer.

The enzyme catalyses deamido-NAD(+) + NH4(+) + ATP = AMP + diphosphate + NAD(+) + H(+). It functions in the pathway cofactor biosynthesis; NAD(+) biosynthesis; NAD(+) from deamido-NAD(+) (ammonia route): step 1/1. Its function is as follows. Catalyzes the ATP-dependent amidation of deamido-NAD to form NAD. Uses ammonia as a nitrogen source. The sequence is that of NH(3)-dependent NAD(+) synthetase from Streptococcus pyogenes serotype M2 (strain MGAS10270).